Consider the following 143-residue polypeptide: Regulator of ribonuclease activity B (143 aa).

Residues Asp117 to Glu135 are compositionally biased toward acidic residues. Residues Asp117–His143 are disordered.

The protein belongs to the RraB family. Interacts with the C-terminal region of Rne.

Its subcellular location is the cytoplasm. Functionally, globally modulates RNA abundance by binding to RNase E (Rne) and regulating its endonucleolytic activity. Can modulate Rne action in a substrate-dependent manner by altering the composition of the degradosome. The sequence is that of Regulator of ribonuclease activity B from Proteus mirabilis (strain HI4320).